A 246-amino-acid polypeptide reads, in one-letter code: Protein phosphatase PhpP (246 aa).

One can recognise a PPM-type phosphatase domain in the interval 2–240; it reads EISLLTDVGQ…DNITVALVSM (239 aa). Mn(2+) is bound by residues D36, G37, D192, and D231.

The protein belongs to the PP2C family. Interacts with the kinase domain of StkP. It depends on Mn(2+) as a cofactor.

It localises to the cytoplasm. It catalyses the reaction O-phospho-L-seryl-[protein] + H2O = L-seryl-[protein] + phosphate. It carries out the reaction O-phospho-L-threonyl-[protein] + H2O = L-threonyl-[protein] + phosphate. With respect to regulation, phosphatase activity is inhibited by NaF but not by okadaic acid. Protein phosphatase able to dephosphorylate StkP-P and a phosphothreonine residue in a phosphopeptide synthetic substrate. PhpP and its cognate protein kinase StkP appear to constitute a functional signaling couple in vivo, PhpP's primary role probably being to control phosphorylation levels of StkP and of its targets (which include LocZ, DivIVA and KhpB (also called EloR/Jag)). PhpP thus performs an essential control of StkP activity. Overexpression confers an stkP deletion-like phenotype. This Streptococcus pneumoniae protein is Protein phosphatase PhpP (phpP).